A 156-amino-acid chain; its full sequence is Cyanate hydratase (156 aa).

Active-site residues include arginine 96, glutamate 99, and serine 122.

This sequence belongs to the cyanase family.

The catalysed reaction is cyanate + hydrogencarbonate + 3 H(+) = NH4(+) + 2 CO2. In terms of biological role, catalyzes the reaction of cyanate with bicarbonate to produce ammonia and carbon dioxide. The chain is Cyanate hydratase from Escherichia coli (strain K12 / DH10B).